The chain runs to 162 residues: MSMIPISNRRRLSPGDRIWEPFELMNTFLDFPSPALFLSHHFPSLSREIFPQTSSSTVNTQLNWTETPTAHVFKAYLPGVDQDEVIAFVDEEGYLQICTGDNKFMSRFKLPNNALTDQVTAWMEDEFLVVFVEKDASSSPPQLPEIEENRNVRVVEITGDDD.

The sHSP domain maps to 53 to 149 (TSSSTVNTQL…PPQLPEIEEN (97 aa)).

It belongs to the small heat shock protein (HSP20) family. May form oligomeric structures.

It localises to the cytoplasm. The chain is 18.5 kDa class IV heat shock protein (HSP18.5) from Arabidopsis thaliana (Mouse-ear cress).